The sequence spans 354 residues: 3-dehydroquinate synthase (354 aa).

Residues 106 to 110 (GVIGD), 130 to 131 (TS), Lys143, and Lys152 contribute to the NAD(+) site. Zn(2+)-binding residues include Glu185, His246, and His262.

This sequence belongs to the sugar phosphate cyclases superfamily. Dehydroquinate synthase family. Co(2+) serves as cofactor. The cofactor is Zn(2+). Requires NAD(+) as cofactor.

Its subcellular location is the cytoplasm. The enzyme catalyses 7-phospho-2-dehydro-3-deoxy-D-arabino-heptonate = 3-dehydroquinate + phosphate. The protein operates within metabolic intermediate biosynthesis; chorismate biosynthesis; chorismate from D-erythrose 4-phosphate and phosphoenolpyruvate: step 2/7. Its function is as follows. Catalyzes the conversion of 3-deoxy-D-arabino-heptulosonate 7-phosphate (DAHP) to dehydroquinate (DHQ). The sequence is that of 3-dehydroquinate synthase from Leuconostoc mesenteroides subsp. mesenteroides (strain ATCC 8293 / DSM 20343 / BCRC 11652 / CCM 1803 / JCM 6124 / NCDO 523 / NBRC 100496 / NCIMB 8023 / NCTC 12954 / NRRL B-1118 / 37Y).